The primary structure comprises 268 residues: Undecaprenyl-diphosphatase (268 aa).

7 helical membrane-spanning segments follow: residues 47 to 67 (FAVL…FAKL), 83 to 103 (FVIG…VAGS), 109 to 129 (LFNP…LLWV), 144 to 164 (FPLP…IPGV), 184 to 204 (AAEF…VYDF), 218 to 238 (IVAI…KTFL), and 246 to 266 (FELF…ALAM).

It belongs to the UppP family.

It localises to the cell inner membrane. It carries out the reaction di-trans,octa-cis-undecaprenyl diphosphate + H2O = di-trans,octa-cis-undecaprenyl phosphate + phosphate + H(+). Catalyzes the dephosphorylation of undecaprenyl diphosphate (UPP). Confers resistance to bacitracin. The protein is Undecaprenyl-diphosphatase of Rhodopseudomonas palustris (strain BisB5).